The following is a 513-amino-acid chain: GMP synthase [glutamine-hydrolyzing] (513 aa).

The Glutamine amidotransferase type-1 domain occupies 9–198 (LILVLDFGSQ…IREICKCTGE (190 aa)). Cys86 serves as the catalytic Nucleophile. Active-site residues include His172 and Glu174. In terms of domain architecture, GMPS ATP-PPase spans 199–388 (WTMENFIEIE…LGIPEHLVWR (190 aa)). Position 226–232 (226–232 (SGGVDSS)) interacts with ATP.

As to quaternary structure, homodimer.

It catalyses the reaction XMP + L-glutamine + ATP + H2O = GMP + L-glutamate + AMP + diphosphate + 2 H(+). Its pathway is purine metabolism; GMP biosynthesis; GMP from XMP (L-Gln route): step 1/1. In terms of biological role, catalyzes the synthesis of GMP from XMP. In Macrococcus caseolyticus (strain JCSC5402) (Macrococcoides caseolyticum), this protein is GMP synthase [glutamine-hydrolyzing].